The chain runs to 201 residues: Holliday junction branch migration complex subunit RuvA (201 aa).

The segment at 1–64 is domain I; that stretch reads MFNSISGILS…EDQMRLFGFP (64 aa). The domain II stretch occupies residues 65-140; the sequence is NQAERSLFLD…KLTNLNEVSS (76 aa). The tract at residues 140–144 is flexible linker; sequence SKGQA. Residues 145 to 201 are domain III; sequence SVSCEYEDIVTALTEMGFERKSVIVQVEKIAEEMKAAGSDPLKNEEELFRRSIVALS.

Belongs to the RuvA family. Homotetramer. Forms an RuvA(8)-RuvB(12)-Holliday junction (HJ) complex. HJ DNA is sandwiched between 2 RuvA tetramers; dsDNA enters through RuvA and exits via RuvB. An RuvB hexamer assembles on each DNA strand where it exits the tetramer. Each RuvB hexamer is contacted by two RuvA subunits (via domain III) on 2 adjacent RuvB subunits; this complex drives branch migration. In the full resolvosome a probable DNA-RuvA(4)-RuvB(12)-RuvC(2) complex forms which resolves the HJ.

Its subcellular location is the cytoplasm. The RuvA-RuvB-RuvC complex processes Holliday junction (HJ) DNA during genetic recombination and DNA repair, while the RuvA-RuvB complex plays an important role in the rescue of blocked DNA replication forks via replication fork reversal (RFR). RuvA specifically binds to HJ cruciform DNA, conferring on it an open structure. The RuvB hexamer acts as an ATP-dependent pump, pulling dsDNA into and through the RuvAB complex. HJ branch migration allows RuvC to scan DNA until it finds its consensus sequence, where it cleaves and resolves the cruciform DNA. The chain is Holliday junction branch migration complex subunit RuvA from Treponema denticola (strain ATCC 35405 / DSM 14222 / CIP 103919 / JCM 8153 / KCTC 15104).